We begin with the raw amino-acid sequence, 69 residues long: M-poneratoxin-Dq4e (69 aa).

An N-terminal signal peptide occupies residues Met-1 to Ala-25. Positions Ala-26–Ala-39 are excised as a propeptide.

Expressed by the venom gland.

It localises to the secreted. Its function is as follows. May have antimicrobial properties, like most ant linear peptides. In addition, when tested in vitro on the parasite Trypanosoma cruzi (responsible of the Chagas disease), is able to moderately reduce the number of the three forms (epimastigote, trypomastigote and amastigote) by inducing cell death through necrosis. The chain is M-poneratoxin-Dq4e from Dinoponera quadriceps (South American ant).